Consider the following 171-residue polypeptide: Protein GrpE (171 aa).

The interval 1–20 (MNEEKEESPSTEAEGAGAEV) is disordered.

This sequence belongs to the GrpE family. In terms of assembly, homodimer.

It is found in the cytoplasm. Its function is as follows. Participates actively in the response to hyperosmotic and heat shock by preventing the aggregation of stress-denatured proteins, in association with DnaK and GrpE. It is the nucleotide exchange factor for DnaK and may function as a thermosensor. Unfolded proteins bind initially to DnaJ; upon interaction with the DnaJ-bound protein, DnaK hydrolyzes its bound ATP, resulting in the formation of a stable complex. GrpE releases ADP from DnaK; ATP binding to DnaK triggers the release of the substrate protein, thus completing the reaction cycle. Several rounds of ATP-dependent interactions between DnaJ, DnaK and GrpE are required for fully efficient folding. This Acidithiobacillus ferrooxidans (strain ATCC 23270 / DSM 14882 / CIP 104768 / NCIMB 8455) (Ferrobacillus ferrooxidans (strain ATCC 23270)) protein is Protein GrpE.